The chain runs to 123 residues: Small ribosomal subunit protein uS12 (123 aa).

Belongs to the universal ribosomal protein uS12 family. As to quaternary structure, part of the 30S ribosomal subunit. Contacts proteins S8 and S17. May interact with IF1 in the 30S initiation complex.

Its function is as follows. With S4 and S5 plays an important role in translational accuracy. Interacts with and stabilizes bases of the 16S rRNA that are involved in tRNA selection in the A site and with the mRNA backbone. Located at the interface of the 30S and 50S subunits, it traverses the body of the 30S subunit contacting proteins on the other side and probably holding the rRNA structure together. The combined cluster of proteins S8, S12 and S17 appears to hold together the shoulder and platform of the 30S subunit. In Corynebacterium diphtheriae (strain ATCC 700971 / NCTC 13129 / Biotype gravis), this protein is Small ribosomal subunit protein uS12.